The following is a 137-amino-acid chain: NADH-ubiquinone oxidoreductase chain 3 (137 aa).

Transmembrane regions (helical) follow at residues 6 to 26, 57 to 77, and 86 to 106; these read LFILFVSIIALLFLFINLIFA, FFIFALVYLLLDLEILLTFPF, and IYGLIILLGFITIITIGFVYE.

The protein belongs to the complex I subunit 3 family.

Its subcellular location is the mitochondrion membrane. The catalysed reaction is a ubiquinone + NADH + 5 H(+)(in) = a ubiquinol + NAD(+) + 4 H(+)(out). Functionally, core subunit of the mitochondrial membrane respiratory chain NADH dehydrogenase (Complex I) that is believed to belong to the minimal assembly required for catalysis. Complex I functions in the transfer of electrons from NADH to the respiratory chain. The immediate electron acceptor for the enzyme is believed to be ubiquinone. The protein is NADH-ubiquinone oxidoreductase chain 3 (ND3) of Podospora anserina (strain S / ATCC MYA-4624 / DSM 980 / FGSC 10383) (Pleurage anserina).